The chain runs to 556 residues: Formate--tetrahydrofolate ligase (556 aa).

Residue 65–72 (TPAGEGKS) coordinates ATP.

This sequence belongs to the formate--tetrahydrofolate ligase family.

The enzyme catalyses (6S)-5,6,7,8-tetrahydrofolate + formate + ATP = (6R)-10-formyltetrahydrofolate + ADP + phosphate. Its pathway is one-carbon metabolism; tetrahydrofolate interconversion. The chain is Formate--tetrahydrofolate ligase from Streptococcus uberis (strain ATCC BAA-854 / 0140J).